Reading from the N-terminus, the 245-residue chain is 1-(5-phosphoribosyl)-5-[(5-phosphoribosylamino)methylideneamino] imidazole-4-carboxamide isomerase (245 aa).

Catalysis depends on aspartate 15, which acts as the Proton acceptor. Aspartate 135 (proton donor) is an active-site residue.

It belongs to the HisA/HisF family.

Its subcellular location is the cytoplasm. The catalysed reaction is 1-(5-phospho-beta-D-ribosyl)-5-[(5-phospho-beta-D-ribosylamino)methylideneamino]imidazole-4-carboxamide = 5-[(5-phospho-1-deoxy-D-ribulos-1-ylimino)methylamino]-1-(5-phospho-beta-D-ribosyl)imidazole-4-carboxamide. Its pathway is amino-acid biosynthesis; L-histidine biosynthesis; L-histidine from 5-phospho-alpha-D-ribose 1-diphosphate: step 4/9. The protein is 1-(5-phosphoribosyl)-5-[(5-phosphoribosylamino)methylideneamino] imidazole-4-carboxamide isomerase of Haloquadratum walsbyi (strain DSM 16790 / HBSQ001).